A 356-amino-acid chain; its full sequence is Dynein axonemal heavy chain 12 (356 aa).

ANK repeat units lie at residues 17–46 (DSSS…DANV), 50–81 (SGHL…AIKR), 82–111 (SGIS…DVNF), 124–153 (HRKS…MPNQ), 154–183 (DPVN…NVNY), and 185–218 (CRVN…DTEL). The region spanning 290–345 (WSEIHFILTNPRSLKHLCRLKIRKCMGRLRLRCPVFMSFLPLPSRLKAYVLYKEYD) is the SOCS box domain.

It belongs to the dynein heavy chain family. As to quaternary structure, consists of at least two heavy chains and a number of intermediate and light chains.

Its subcellular location is the cytoplasm. The protein resides in the cytoskeleton. The protein localises to the cilium axoneme. It participates in protein modification; protein ubiquitination. Its function is as follows. Force generating protein of respiratory cilia. Produces force towards the minus ends of microtubules. Dynein has ATPase activity; the force-producing power stroke is thought to occur on release of ADP. Involved in sperm motility; implicated in sperm flagellar assembly. In terms of biological role, may be a substrate-recognition component of a SCF-like ECS (Elongin-Cullin-SOCS-box protein) E3 ubiquitin-protein ligase complex which mediates the ubiquitination and subsequent proteasomal degradation of target proteins. The chain is Dynein axonemal heavy chain 12 (DNAH12) from Bos taurus (Bovine).